The sequence spans 23 residues: ALWKNMLKGIGKLAGKAALGAVK.

In terms of tissue distribution, expressed by the skin glands.

It localises to the secreted. Functionally, possesses a potent antimicrobial activity against bacteria, fungi and protozoa. Probably acts by disturbing membrane functions with its amphipathic structure. The sequence is that of Dermaseptin III-like peptide from Phyllomedusa burmeisteri (Brazilian common walking leaf frog).